Reading from the N-terminus, the 311-residue chain is Pyrimidine-specific ribonucleoside hydrolase RihA (311 aa).

Residue H240 is part of the active site.

It belongs to the IUNH family. RihA subfamily.

In terms of biological role, hydrolyzes cytidine or uridine to ribose and cytosine or uracil, respectively. The polypeptide is Pyrimidine-specific ribonucleoside hydrolase RihA (Salmonella choleraesuis (strain SC-B67)).